The following is a 447-amino-acid chain: Elongation factor 1-alpha (447 aa).

The 226-residue stretch at 5-230 folds into the tr-type G domain; it reads KFHINIVVIG…DQINDAKRPS (226 aa). A G1 region spans residues 14 to 21; the sequence is GHVDSGKS. 14-21 provides a ligand contact to GTP; that stretch reads GHVDSGKS. K55 is subject to N6,N6-dimethyllysine. The segment at 70–74 is G2; it reads GITID. K79 is modified (N6,N6,N6-trimethyllysine). The tract at residues 91 to 94 is G3; it reads DAPG. GTP-binding positions include 91-95 and 153-156; these read DAPGH and NKMD. The interval 153 to 156 is G4; that stretch reads NKMD. K187 bears the N6,N6,N6-trimethyllysine mark. The segment at 194–196 is G5; sequence SGF. An N6-methyllysine modification is found at K261. E289 is subject to 5-glutamyl glycerylphosphorylethanolamine. K306 bears the N6,N6,N6-trimethyllysine mark. Residue E362 is modified to 5-glutamyl glycerylphosphorylethanolamine. K396 is subject to N6,N6,N6-trimethyllysine.

It belongs to the TRAFAC class translation factor GTPase superfamily. Classic translation factor GTPase family. EF-Tu/EF-1A subfamily. As to expression, was detected in all tissues examined but was most abundant in roots and salt-adapted cultured cells.

The protein localises to the cytoplasm. This protein promotes the GTP-dependent binding of aminoacyl-tRNA to the A-site of ribosomes during protein biosynthesis. In Nicotiana tabacum (Common tobacco), this protein is Elongation factor 1-alpha.